The following is a 359-amino-acid chain: Heat-inducible transcription repressor HrcA (359 aa).

This sequence belongs to the HrcA family.

Negative regulator of class I heat shock genes (grpE-dnaK-dnaJ and groELS operons). Prevents heat-shock induction of these operons. The polypeptide is Heat-inducible transcription repressor HrcA (Rhizobium meliloti (strain 1021) (Ensifer meliloti)).